We begin with the raw amino-acid sequence, 183 residues long: TATA box-binding protein-like 1 (183 aa).

The protein belongs to the TBP family. In terms of assembly, binds TFIIA and TFIIB. Present in the brain, heart, liver and gizzard.

The protein localises to the cytoplasm. Its subcellular location is the nucleus. Part of a specialized transcription system that mediates the transcription of most ribosomal proteins through the 5'-TCT-3' motif which is a core promoter element at these genes. Seems to also mediate the transcription of NF1. Does not bind the TATA box. This is TATA box-binding protein-like 1 (TBPL1) from Gallus gallus (Chicken).